Consider the following 418-residue polypeptide: Caveolae-associated protein 2 (418 aa).

A disordered region spans residues Met-1 to Ser-42. The residue at position 2 (Gly-2) is an N-acetylglycine. The interaction with CAVIN1 stretch occupies residues Gly-2–Ala-168. Phosphoserine is present on residues Ser-27, Ser-35, Ser-37, and Ser-51. Coiled coils occupy residues Leu-61–Glu-87 and Arg-126–Arg-268. The tract at residues Leu-62–Leu-100 is leucine-zipper. Thr-196 bears the Phosphothreonine mark. Disordered stretches follow at residues Val-200–Lys-238 and Ile-262–Gln-382. 3 positions are modified to phosphoserine: Ser-203, Ser-204, and Ser-218. Acidic residues predominate over residues Ser-203–Ala-219. Positions Glu-220–Lys-238 are enriched in basic and acidic residues. A compositionally biased stretch (polar residues) spans Leu-275–Ser-287. A phosphoserine mark is found at Ser-283, Ser-284, Ser-287, Ser-288, Ser-293, and Ser-296. Over residues Arg-303 to Glu-321 the composition is skewed to basic and acidic residues. Residues Ser-327, Ser-336, Ser-359, and Ser-363 each carry the phosphoserine modification. Residues Arg-355–Asp-366 show a composition bias toward polar residues. Thr-368 is modified (phosphothreonine). Acidic residues predominate over residues Thr-368 to Pro-377. At Tyr-388 the chain carries Phosphotyrosine. Phosphoserine occurs at positions 390 and 396. The disordered stretch occupies residues Ser-396–Ala-418.

This sequence belongs to the CAVIN family. As to quaternary structure, component of the CAVIN complex composed of CAVIN1, CAVIN2, CAVIN3 and CAVIN4. Binds to PRKCA in the presence of phosphatidylserine. Interacts with CAVIN4; this augments the transactivation of NPPA by CAVIN4. Interacts with CAVIN1. Interacts with CAV3. In terms of processing, the N-terminus is blocked. In terms of tissue distribution, heart, adipose tissue, lung and endothelial cells (at protein level). Highly expressed in kidney and expressed at lower levels in liver, spleen, thymus, stomach, intestine and uterus.

It is found in the cytoplasm. The protein localises to the cytosol. The protein resides in the membrane. It localises to the caveola. Plays an important role in caveolar biogenesis and morphology. Regulates caveolae morphology by inducing membrane curvature within caveolae. Plays a role in caveola formation in a tissue-specific manner. Required for the formation of caveolae in the lung and fat endothelia but not in the heart endothelia. Negatively regulates the size or stability of CAVIN complexes in the lung endothelial cells. May play a role in targeting PRKCA to caveolae. This chain is Caveolae-associated protein 2 (Cavin2), found in Mus musculus (Mouse).